Here is a 274-residue protein sequence, read N- to C-terminus: MNKTAIALLALLASSVSLAATPWQKITQPVPGSAQSIGSFSNGCIVGADTLPIQSEHYQVMRTDQRRYFGHPDLVMFIQRLSSQVSNLGMGTVLIGDMGMPAGGRFNGGHASHQTGLDVDIFLQLPKTRRTSAQLLRPQALDLVSRDGKHVVSTLWKPEIFSLIKLAAQDKDVTRIFVNPAIKQQLCLDAGTDRDWLRKVRPWFQHRAHMHVRLRCPADSLECEDQPLPPPGDGCGAELQSWFEPPKPGTTKPEKKTPPPLPPSCQALLDEHVI.

The signal sequence occupies residues 1–19 (MNKTAIALLALLASSVSLA). 3 disulfides stabilise this stretch: Cys-44/Cys-265, Cys-187/Cys-235, and Cys-216/Cys-223. Zn(2+) is bound by residues His-110, His-113, Asp-120, Asp-147, His-150, and His-211. The tract at residues 227–274 (PLPPPGDGCGAELQSWFEPPKPGTTKPEKKTPPPLPPSCQALLDEHVI) is disordered.

This sequence belongs to the peptidase M74 family. Dimer. The cofactor is Zn(2+).

The protein resides in the periplasm. In terms of biological role, murein endopeptidase that cleaves the D-alanyl-meso-2,6-diamino-pimelyl amide bond that connects peptidoglycan strands. Likely plays a role in the removal of murein from the sacculus. The protein is Penicillin-insensitive murein endopeptidase of Escherichia coli O157:H7.